A 47-amino-acid polypeptide reads, in one-letter code: Heat shock protein HSP 90 (47 aa).

Belongs to the heat shock protein 90 family. Homodimer.

The protein resides in the cytoplasm. Its function is as follows. Putative molecular chaperone that may promote the maturation, structural maintenance and proper regulation of specific target proteins. The sequence is that of Heat shock protein HSP 90 from Oryctolagus cuniculus (Rabbit).